Here is a 430-residue protein sequence, read N- to C-terminus: WD repeat-containing protein jip5 (430 aa).

WD repeat units follow at residues 9-48 (PLSS…AAAE), 72-111 (RHKG…VTSK), 117-158 (TNTD…SFKS), 215-262 (DQEE…DQSE), 272-318 (AGGE…GVVE), and 323-360 (DDIE…EEEE). Residues 356 to 374 (EEEEEEEEEEQEDIEDNDD) show a composition bias toward acidic residues. Residues 356 to 430 (EEEEEEEEEE…NGILKFKGME (75 aa)) form a disordered region. Basic and acidic residues predominate over residues 382–397 (HALERDSDDSDARADS). Over residues 405 to 416 (RKKRKKKKKGKK) the composition is skewed to basic residues.

Belongs to the WD repeat WDR55 family.

It is found in the nucleus. The protein resides in the nucleolus. This is WD repeat-containing protein jip5 (jip5) from Botryotinia fuckeliana (strain B05.10) (Noble rot fungus).